Here is a 1080-residue protein sequence, read N- to C-terminus: Presequence protease 1, chloroplastic/mitochondrial (1080 aa).

A chloroplast and mitochondrion-targeting transit peptide spans 1–85 (MLRTVSCLAS…GQFSRLSVRA (85 aa)). Valine 86 carries the post-translational modification N-acetylvaline. Residue histidine 162 coordinates Zn(2+). Glutamate 165 serves as the catalytic Proton acceptor. A Zn(2+)-binding site is contributed by histidine 166. The active site involves glutamate 240. Glutamate 262 is a binding site for Zn(2+). Residues 571–612 (EKATQEEVEEKNILEKVKAAMTEEDLAELARATEELKLKQET) adopt a coiled-coil conformation. Arginine 705 lines the Mg(2+) pocket.

Belongs to the peptidase M16 family. PreP subfamily. Homodimer. Zn(2+) serves as cofactor. Mg(2+) is required as a cofactor. Expressed only in siliques and flowers.

Its subcellular location is the plastid. The protein resides in the chloroplast stroma. The protein localises to the mitochondrion matrix. With respect to regulation, inactive in the absence of MgCl(2) and CaCl(2) and full activation at 10 mM concentrations of either ion. Completely inhibited by the metal chelator orthophenanthroline, but not affected by phenylmethylsulfonyl fluoride (PMSF) or N-ethylmaleimide (NEM). Its function is as follows. ATP-independent protease that degrades both mitochondrial and chloroplastic transit peptides after their cleavage. Also degrades other unstructured peptides. Specific for peptides in the range of 10 to 65 residues. Shows a preference for cleavage after small polar residues and before basic residues, with a bias for positively charged amino acid residues. This is Presequence protease 1, chloroplastic/mitochondrial (PREP1) from Arabidopsis thaliana (Mouse-ear cress).